The sequence spans 132 residues: Small ribosomal subunit protein uS8 (132 aa).

This sequence belongs to the universal ribosomal protein uS8 family. In terms of assembly, part of the 30S ribosomal subunit. Contacts proteins S5 and S12.

In terms of biological role, one of the primary rRNA binding proteins, it binds directly to 16S rRNA central domain where it helps coordinate assembly of the platform of the 30S subunit. This chain is Small ribosomal subunit protein uS8, found in Geobacter sp. (strain M21).